Reading from the N-terminus, the 187-residue chain is Dihydrofolate reductase (187 aa).

The 182-residue stretch at 4–185 (PLNCIVAVSQ…IKYKFEVYEK (182 aa)) folds into the DHFR domain. NADP(+) contacts are provided by residues Ala-10 and 16 to 22 (GIGKNGD). Residue 31 to 36 (EFQYFQ) coordinates substrate. 55–57 (RKT) lines the NADP(+) pocket. Arg-71 serves as a coordination point for substrate. Residues 77-79 (SRE) and 117-124 (GGSSVYKE) contribute to the NADP(+) site.

Belongs to the dihydrofolate reductase family. As to quaternary structure, homodimer.

The protein localises to the mitochondrion. The protein resides in the cytoplasm. The enzyme catalyses (6S)-5,6,7,8-tetrahydrofolate + NADP(+) = 7,8-dihydrofolate + NADPH + H(+). The protein operates within cofactor biosynthesis; tetrahydrofolate biosynthesis; 5,6,7,8-tetrahydrofolate from 7,8-dihydrofolate: step 1/1. Functionally, key enzyme in folate metabolism. Contributes to the de novo mitochondrial thymidylate biosynthesis pathway. Catalyzes an essential reaction for de novo glycine and purine synthesis, and for DNA precursor synthesis. Binds its own mRNA and that of DHFR2. This Bos taurus (Bovine) protein is Dihydrofolate reductase (DHFR).